We begin with the raw amino-acid sequence, 156 residues long: ATP synthase subunit b (156 aa).

Residues 7–27 (LIGQLIAFALFVAFCMKFVWP) traverse the membrane as a helical segment.

This sequence belongs to the ATPase B chain family. F-type ATPases have 2 components, F(1) - the catalytic core - and F(0) - the membrane proton channel. F(1) has five subunits: alpha(3), beta(3), gamma(1), delta(1), epsilon(1). F(0) has three main subunits: a(1), b(2) and c(10-14). The alpha and beta chains form an alternating ring which encloses part of the gamma chain. F(1) is attached to F(0) by a central stalk formed by the gamma and epsilon chains, while a peripheral stalk is formed by the delta and b chains.

It localises to the cell inner membrane. Functionally, f(1)F(0) ATP synthase produces ATP from ADP in the presence of a proton or sodium gradient. F-type ATPases consist of two structural domains, F(1) containing the extramembraneous catalytic core and F(0) containing the membrane proton channel, linked together by a central stalk and a peripheral stalk. During catalysis, ATP synthesis in the catalytic domain of F(1) is coupled via a rotary mechanism of the central stalk subunits to proton translocation. Its function is as follows. Component of the F(0) channel, it forms part of the peripheral stalk, linking F(1) to F(0). The protein is ATP synthase subunit b of Actinobacillus pleuropneumoniae serotype 5b (strain L20).